The sequence spans 184 residues: Photosystem I assembly protein Ycf4 (184 aa).

2 helical membrane passes run I19–G39 and I57–S77.

Belongs to the Ycf4 family.

It is found in the plastid. It localises to the chloroplast thylakoid membrane. Seems to be required for the assembly of the photosystem I complex. The chain is Photosystem I assembly protein Ycf4 from Eucalyptus globulus subsp. globulus (Tasmanian blue gum).